Consider the following 601-residue polypeptide: Multidrug and toxin extrusion protein 2 (601 aa).

Residues 1-62 (MNTAFAGFDE…PRGFWDEARA (62 aa)) are Cytoplasmic-facing. Residues 63–83 (LFVLSGPLFLFQVLNFLTYVV) form a helical membrane-spanning segment. Over 84–95 (GTVFCGHLGKVE) the chain is Extracellular. A helical transmembrane segment spans residues 96–116 (LASVTLGVAFVNVCGVSVGAG). The Cytoplasmic segment spans residues 117–145 (LSSACDTLMSQSFGSPNKKHVGVILQRGS). The helical transmembrane segment at 146-166 (LILLLCCLPCWALFLNTQHIL) threads the bilayer. Residues 167 to 182 (LLFRQDPAVSRLTQDY) are Extracellular-facing. A helical membrane pass occupies residues 183-203 (AMIFIPGLPAIFLYSLLAKYL). Residues 204-212 (QNQGIVWPQ) lie on the Cytoplasmic side of the membrane. The chain crosses the membrane as a helical span at residues 213 to 233 (VLSGVVGNCVNGVANYALVSV). The Extracellular segment spans residues 234–241 (LNLGVRGS). Residues 242–262 (AYANTISQFVQAAFLFLHIVL) form a helical membrane-spanning segment. Residues 263 to 281 (KKLHLETWEGWSSQCLRDW) are Cytoplasmic-facing. A helical membrane pass occupies residues 282–301 (GPFLSLAIPSMLMMCVEWWA). The Extracellular portion of the chain corresponds to 302–320 (YEIGSFLMGLLGVVDLSGQ). Residues 321 to 341 (AIIYEVATVVYMIPMGLGMAV) form a helical membrane-spanning segment. Over 342–361 (CVRVGTALGAADTLQAKRSA) the chain is Cytoplasmic. A helical membrane pass occupies residues 362-382 (VSGLLCTAGTSLVVGTLLGLL). Over 383-402 (NSQLGYIFTSDEEVIALVNQ) the chain is Extracellular. The chain crosses the membrane as a helical span at residues 403–423 (VLPIYIVFQLVEAVCCVFGGV). The Cytoplasmic segment spans residues 424–437 (LRGTGKQAFGAIVN). A helical membrane pass occupies residues 438–458 (AIMYYIVGLPLGIVLTFVVGM). Residue Arg459 is a topological domain, extracellular. Residues 460–480 (IMGLWLGMLTCIFLAAVTFVV) traverse the membrane as a helical segment. At 481–577 (YAVQLDWKLA…LSVRQLLFRR (97 aa)) the chain is on the cytoplasmic side. Residues 578–598 (GAALAASVAVLMAGLLVRVLT) traverse the membrane as a helical segment. Over 599–601 (TGY) the chain is Extracellular.

It belongs to the multi antimicrobial extrusion (MATE) (TC 2.A.66.1) family. Expressed in renal cortical tissues.

The protein localises to the cell membrane. It localises to the apical cell membrane. The enzyme catalyses thiamine(out) + H(+)(in) = thiamine(in) + H(+)(out). It carries out the reaction estrone 3-sulfate(in) + H(+)(out) = estrone 3-sulfate(out) + H(+)(in). The catalysed reaction is creatinine(in) + H(+)(out) = creatinine(out) + H(+)(in). Multidrug efflux pump that functions as a H(+)/organic cation antiporter. Mediates the efflux of cationic compounds, such as the model cations, tetraethylammonium (TEA) and 1-methyl-4-phenylpyridinium (MPP+), the platinum-based drug oxaliplatin or weak bases that are positively charged at physiological pH, cimetidine or the antidiabetic drug metformin. Mediates the efflux of the endogenous compounds creatinine, thiamine and estrone-3-sulfate. Plays a physiological role in the excretion of drugs, toxins and endogenous metabolites through the kidney. The polypeptide is Multidrug and toxin extrusion protein 2 (SLC47A2) (Oryctolagus cuniculus (Rabbit)).